A 360-amino-acid chain; its full sequence is Chorismate synthase (360 aa).

The disordered stretch occupies residues 36 to 60; the sequence is LSEDDIQPDLDRRKPGTSKYTTPRR. NADP(+) is bound at residue R48. FMN-binding positions include 125 to 127, 246 to 247, G286, 301 to 305, and R327; these read RSS, NA, and KPTSS.

Belongs to the chorismate synthase family. In terms of assembly, homotetramer. It depends on FMNH2 as a cofactor.

It catalyses the reaction 5-O-(1-carboxyvinyl)-3-phosphoshikimate = chorismate + phosphate. The protein operates within metabolic intermediate biosynthesis; chorismate biosynthesis; chorismate from D-erythrose 4-phosphate and phosphoenolpyruvate: step 7/7. Functionally, catalyzes the anti-1,4-elimination of the C-3 phosphate and the C-6 proR hydrogen from 5-enolpyruvylshikimate-3-phosphate (EPSP) to yield chorismate, which is the branch point compound that serves as the starting substrate for the three terminal pathways of aromatic amino acid biosynthesis. This reaction introduces a second double bond into the aromatic ring system. The protein is Chorismate synthase of Histophilus somni (strain 129Pt) (Haemophilus somnus).